Here is a 299-residue protein sequence, read N- to C-terminus: Probable lipid kinase YegS (299 aa).

The region spanning 2 to 133 (ANFPASLLIL…IDMARVNDKT (132 aa)) is the DAGKc domain. Residues T40, 66–72 (GDGTINE), and T95 contribute to the ATP site. The Mg(2+) site is built by L215, D218, and L220. Catalysis depends on E271, which acts as the Proton acceptor.

The protein belongs to the diacylglycerol/lipid kinase family. YegS lipid kinase subfamily. Mg(2+) serves as cofactor. Ca(2+) is required as a cofactor.

The protein resides in the cytoplasm. In terms of biological role, probably phosphorylates lipids; the in vivo substrate is unknown. In Salmonella heidelberg (strain SL476), this protein is Probable lipid kinase YegS.